The chain runs to 412 residues: Phosphoglycerate kinase (412 aa).

Substrate is bound by residues 26 to 28 (DFN), arginine 42, 65 to 68 (HLGR), arginine 133, and arginine 166. ATP-binding positions include lysine 217, glycine 308, glutamate 339, and 368 to 371 (GGDS).

Belongs to the phosphoglycerate kinase family. Monomer.

It localises to the cytoplasm. It carries out the reaction (2R)-3-phosphoglycerate + ATP = (2R)-3-phospho-glyceroyl phosphate + ADP. The protein operates within carbohydrate degradation; glycolysis; pyruvate from D-glyceraldehyde 3-phosphate: step 2/5. This is Phosphoglycerate kinase from Synechococcus sp. (strain JA-2-3B'a(2-13)) (Cyanobacteria bacterium Yellowstone B-Prime).